A 275-amino-acid polypeptide reads, in one-letter code: Nitrogenase iron protein 3 (275 aa).

9-16 (GKGGIGKS) serves as a coordination point for ATP. C97 contributes to the [4Fe-4S] cluster binding site. Residue R100 is modified to ADP-ribosylarginine; by dinitrogenase reductase ADP-ribosyltransferase. C132 lines the [4Fe-4S] cluster pocket.

Belongs to the NifH/BchL/ChlL family. As to quaternary structure, homodimer. [4Fe-4S] cluster is required as a cofactor. The reversible ADP-ribosylation of Arg-100 inactivates the nitrogenase reductase and regulates nitrogenase activity.

The catalysed reaction is N2 + 8 reduced [2Fe-2S]-[ferredoxin] + 16 ATP + 16 H2O = H2 + 8 oxidized [2Fe-2S]-[ferredoxin] + 2 NH4(+) + 16 ADP + 16 phosphate + 6 H(+). Functionally, the key enzymatic reactions in nitrogen fixation are catalyzed by the nitrogenase complex, which has 2 components: the iron protein (component 2) and a component 1 which is either a molybdenum-iron protein, a vanadium-iron, or an iron-iron protein. This is Nitrogenase iron protein 3 (anfH) from Azotobacter vinelandii.